The chain runs to 207 residues: Glycerol-3-phosphate acyltransferase (207 aa).

The next 5 membrane-spanning stretches (helical) occupy residues 4-24 (VVATVVFAVAAYLIGSVSFAV), 58-78 (ILTLLGDAAKGWLAVWLAQLL), 86-106 (DMGIALVVIAAFLGHLYPVFH), 120-140 (ILLALSGWLGLATLATWLIIA), and 162-182 (VLLFGIDPLAGAIAVMSVLLI).

The protein belongs to the PlsY family. As to quaternary structure, probably interacts with PlsX.

It localises to the cell inner membrane. It carries out the reaction an acyl phosphate + sn-glycerol 3-phosphate = a 1-acyl-sn-glycero-3-phosphate + phosphate. The protein operates within lipid metabolism; phospholipid metabolism. Functionally, catalyzes the transfer of an acyl group from acyl-phosphate (acyl-PO(4)) to glycerol-3-phosphate (G3P) to form lysophosphatidic acid (LPA). This enzyme utilizes acyl-phosphate as fatty acyl donor, but not acyl-CoA or acyl-ACP. This is Glycerol-3-phosphate acyltransferase from Ralstonia nicotianae (strain ATCC BAA-1114 / GMI1000) (Ralstonia solanacearum).